Here is a 451-residue protein sequence, read N- to C-terminus: DNA polymerase IV (451 aa).

Residues 5-187 enclose the UmuC domain; it reads VIHVDMDAFF…LPVGRLWGVG (183 aa). Positions 9 and 104 each coordinate Mg(2+). Glu105 is an active-site residue.

This sequence belongs to the DNA polymerase type-Y family. Monomer. Mg(2+) serves as cofactor.

The protein resides in the cytoplasm. It carries out the reaction DNA(n) + a 2'-deoxyribonucleoside 5'-triphosphate = DNA(n+1) + diphosphate. In terms of biological role, poorly processive, error-prone DNA polymerase involved in untargeted mutagenesis. Copies undamaged DNA at stalled replication forks, which arise in vivo from mismatched or misaligned primer ends. These misaligned primers can be extended by PolIV. Exhibits no 3'-5' exonuclease (proofreading) activity. May be involved in translesional synthesis, in conjunction with the beta clamp from PolIII. This is DNA polymerase IV from Corynebacterium diphtheriae (strain ATCC 700971 / NCTC 13129 / Biotype gravis).